An 88-amino-acid chain; its full sequence is Small ribosomal subunit protein uS17 (88 aa).

The protein belongs to the universal ribosomal protein uS17 family. As to quaternary structure, part of the 30S ribosomal subunit.

Its function is as follows. One of the primary rRNA binding proteins, it binds specifically to the 5'-end of 16S ribosomal RNA. In Azotobacter vinelandii (strain DJ / ATCC BAA-1303), this protein is Small ribosomal subunit protein uS17.